The chain runs to 686 residues: Acyl-CoA synthetase short-chain family member 3, mitochondrial (686 aa).

A mitochondrion-targeting transit peptide spans 1-29 (MKPSWLQCRKVTGAGGLGGSLPASSPARG). CoA is bound at residue 226 to 229 (EPGR). ATP is bound by residues 424 to 426 (GER) and 445 to 450 (DHWWQT). An N6-succinyllysine modification is found at K517. K523 is subject to N6-acetyllysine. The ATP site is built by D538, R553, and R564. Residue R623 participates in CoA binding.

It belongs to the ATP-dependent AMP-binding enzyme family.

The protein resides in the mitochondrion matrix. It catalyses the reaction acetate + ATP + CoA = acetyl-CoA + AMP + diphosphate. The catalysed reaction is propanoate + ATP + CoA = propanoyl-CoA + AMP + diphosphate. The enzyme catalyses butanoate + ATP + CoA = butanoyl-CoA + AMP + diphosphate. Its function is as follows. Catalyzes the synthesis of acetyl-CoA from short-chain fatty acids. Propionate is the preferred substrate but can also utilize acetate and butyrate with a much lower affinity. This Bos taurus (Bovine) protein is Acyl-CoA synthetase short-chain family member 3, mitochondrial (ACSS3).